The chain runs to 419 residues: MGARAIFRGFNRPSRVLMINQFGINIGFYMLMPYLADYLAGPLGLAAWAVGLVMGVRNFSQQGMFFVGGTLADRFGYKPLIIAGCLIRTGGFALLVVAQSLPSVLIAAAATGFAGALFNPAVRGYLAAEAGERKIEAFAMFNVFYQSGILLGPLVGLVLLALDFRITVLAAAGVFGLLTVAQLVALPQHRADSEREKTSILQDWRVVVRNRPFLTLAAAMTGCYALSFQIYLALPMQASILMPRNQYLLIAAMFAVSGLVAVGGQLRITRWFAVRWGAERSLVVGATILAASFIPVAVIPNGQRFGVAVAVMALVLSASLLAVASAALFPFEMRAVVALSGDRLVATHYGFYSTIVGVGVLVGNLAIGSLMSAARRLNTDEIVWGGLILVGIVAVAGLRRLDTFTSGSQNMTGRWAAPR.

The next 12 helical transmembrane spans lie at 15 to 35 (RVLMINQFGINIGFYMLMPYL), 36 to 56 (ADYLAGPLGLAAWAVGLVMGV), 77 to 99 (YKPLIIAGCLIRTGGFALLVVAQ), 104 to 126 (VLIAAAATGFAGALFNPAVRGYL), 140 to 160 (MFNVFYQSGILLGPLVGLVLL), 166 to 186 (ITVLAAAGVFGLLTVAQLVAL), 213 to 233 (FLTLAAAMTGCYALSFQIYLA), 246 to 266 (QYLLIAAMFAVSGLVAVGGQL), 282 to 302 (LVVGATILAASFIPVAVIPNG), 309 to 329 (VAVMALVLSASLLAVASAALF), 351 to 371 (FYSTIVGVGVLVGNLAIGSLM), and 377 to 397 (LNTDEIVWGGLILVGIVAVAG).

It belongs to the major facilitator superfamily.

Its subcellular location is the cell membrane. This is an uncharacterized protein from Mycobacterium tuberculosis (strain CDC 1551 / Oshkosh).